The chain runs to 190 residues: Xanthine phosphoribosyltransferase (190 aa).

Xanthine is bound by residues leucine 20 and asparagine 27. 128-132 (ANGKA) contributes to the 5-phospho-alpha-D-ribose 1-diphosphate binding site. Lysine 156 contributes to the xanthine binding site.

Belongs to the purine/pyrimidine phosphoribosyltransferase family. Xpt subfamily. In terms of assembly, homodimer.

Its subcellular location is the cytoplasm. The catalysed reaction is XMP + diphosphate = xanthine + 5-phospho-alpha-D-ribose 1-diphosphate. Its pathway is purine metabolism; XMP biosynthesis via salvage pathway; XMP from xanthine: step 1/1. Functionally, converts the preformed base xanthine, a product of nucleic acid breakdown, to xanthosine 5'-monophosphate (XMP), so it can be reused for RNA or DNA synthesis. This chain is Xanthine phosphoribosyltransferase, found in Pseudomonas putida (strain ATCC 700007 / DSM 6899 / JCM 31910 / BCRC 17059 / LMG 24140 / F1).